Reading from the N-terminus, the 161-residue chain is Probable metalloprotease HVO_1016 (161 aa).

The 122-residue stretch at 10-131 (VGIAADALDF…WEAFDQSGEV (122 aa)) folds into the MPN domain. Glu31 functions as the Proton donor/acceptor in the catalytic mechanism. Zn(2+)-binding residues include His87, His89, and Asp100. Residues 87–100 (HSHPNGVLRPSDAD) carry the JAMM motif motif.

It belongs to the peptidase M67B family. As to quaternary structure, monomer and homodimer. Requires Zn(2+) as cofactor.

Its function is as follows. Probable metalloprotease. Does not hydrolyze SAMP1- and SAMP2-protein conjugates, diglycine-AMC, Ub-AMC, hemoglobin, cytochrome c, carbonic anhydrase, creatinine phosphokinase, beta-amylase and bovine serum albumin. The sequence is that of Probable metalloprotease HVO_1016 from Haloferax volcanii (strain ATCC 29605 / DSM 3757 / JCM 8879 / NBRC 14742 / NCIMB 2012 / VKM B-1768 / DS2) (Halobacterium volcanii).